A 92-amino-acid chain; its full sequence is UPF0223 protein SPCG_1392 (92 aa).

The protein belongs to the UPF0223 family.

This chain is UPF0223 protein SPCG_1392, found in Streptococcus pneumoniae (strain CGSP14).